A 171-amino-acid chain; its full sequence is MTNSTSDFVGVLEADLNGQDLRIGIVQARFNEDHCVALTSACINELLSLGVTQSDIKLVTVPGALEISFALQKMAETGEFDGLIALGAVIRGETYHFELVSNESAASITRISIDSGLPIANGVLTCDTDEQANARVQVKGAECAQAVVEMANLALALTPDIDIEINASEEE.

5-amino-6-(D-ribitylamino)uracil contacts are provided by residues Phe-30, 64–66 (ALE), and 88–90 (AVI). 93–94 (ET) contacts (2S)-2-hydroxy-3-oxobutyl phosphate. His-96 (proton donor) is an active-site residue. Asn-121 provides a ligand contact to 5-amino-6-(D-ribitylamino)uracil. A (2S)-2-hydroxy-3-oxobutyl phosphate-binding site is contributed by Arg-135.

It belongs to the DMRL synthase family.

It catalyses the reaction (2S)-2-hydroxy-3-oxobutyl phosphate + 5-amino-6-(D-ribitylamino)uracil = 6,7-dimethyl-8-(1-D-ribityl)lumazine + phosphate + 2 H2O + H(+). Its pathway is cofactor biosynthesis; riboflavin biosynthesis; riboflavin from 2-hydroxy-3-oxobutyl phosphate and 5-amino-6-(D-ribitylamino)uracil: step 1/2. Catalyzes the formation of 6,7-dimethyl-8-ribityllumazine by condensation of 5-amino-6-(D-ribitylamino)uracil with 3,4-dihydroxy-2-butanone 4-phosphate. This is the penultimate step in the biosynthesis of riboflavin. The protein is 6,7-dimethyl-8-ribityllumazine synthase of Polynucleobacter necessarius subsp. necessarius (strain STIR1).